The following is a 444-amino-acid chain: Protein kinase C and casein kinase substrate in neurons protein 1 (444 aa).

Phosphoserine occurs at positions 2 and 79. An F-BAR domain is found at 13-283; the sequence is EETTDSFWEV…AIRGADAQED (271 aa). Residues 26-275 adopt a coiled-coil conformation; that stretch reads KRTVKRIDDG…HVYRELEQAI (250 aa). Disordered regions lie at residues 175–194 and 309–386; these read MNSK…LQDK and LPHT…DDSK. A Phosphothreonine modification is found at Thr-184. The span at 314–324 shows a compositional bias: basic and acidic residues; sequence TKKEKQPKKAE. Residues 329–351 show a composition bias toward polar residues; the sequence is TNATGAVESTSQAGDRGSVSSYD. Phosphoserine is present on residues Ser-346, Ser-348, Ser-349, Ser-361, and Ser-365. The SH3 domain occupies 385 to 444; the sequence is SKGVRVRALYDYDGQEQDELSFKAGDELTKLGEEDEQGWCRGRLDSGQLGLYPANYVEAI. Phosphotyrosine is present on Tyr-394. Residues Ser-405 and Ser-430 each carry the phosphoserine modification.

This sequence belongs to the PACSIN family. In terms of assembly, may form heterooligomers with other PACSINs. Interacts with MAPT. Interacts with TRPV4. Interacts (via SH3 domain) with SYNJ1 and WASL. Interacts with DNM2 and DNM3. Interacts with both COBL and DBNL. Identified in a complex composed of COBL, PACSIN1 and WASL. Interacts with EHD1 and EHD3. Homodimer. Interacts (via SH3 domain) with DNM1; the interaction is reduced by DNM1 phosphorylation. Post-translationally, phosphorylated by casein kinase 2 (CK2) and protein kinase C (PKC). In terms of tissue distribution, highly expressed in brain and, at much lower levels, in heart and pancreas.

The protein localises to the cytoplasm. It localises to the cell projection. It is found in the synapse. Its subcellular location is the synaptosome. The protein resides in the ruffle membrane. The protein localises to the membrane. It localises to the cytoplasmic vesicle membrane. It is found in the cytosol. Its subcellular location is the cell membrane. Functionally, plays a role in the reorganization of the microtubule cytoskeleton via its interaction with MAPT; this decreases microtubule stability and inhibits MAPT-induced microtubule polymerization. Plays a role in cellular transport processes by recruiting DNM1, DNM2 and DNM3 to membranes. Plays a role in the reorganization of the actin cytoskeleton and in neuron morphogenesis via its interaction with COBL and WASL, and by recruiting COBL to the cell cortex. Plays a role in the regulation of neurite formation, neurite branching and the regulation of neurite length. Required for normal synaptic vesicle endocytosis; this process retrieves previously released neurotransmitters to accommodate multiple cycles of neurotransmission. Required for normal excitatory and inhibitory synaptic transmission. Binds to membranes via its F-BAR domain and mediates membrane tubulation. The protein is Protein kinase C and casein kinase substrate in neurons protein 1 (PACSIN1) of Homo sapiens (Human).